Reading from the N-terminus, the 162-residue chain is NADH-quinone oxidoreductase subunit I (162 aa).

2 4Fe-4S ferredoxin-type domains span residues 53-83 and 93-122; these read QRRY…IESE and SRYD…ETHI. Positions 63, 66, 69, 73, 102, 105, 108, and 112 each coordinate [4Fe-4S] cluster.

The protein belongs to the complex I 23 kDa subunit family. In terms of assembly, NDH-1 is composed of 14 different subunits. Subunits NuoA, H, J, K, L, M, N constitute the membrane sector of the complex. [4Fe-4S] cluster serves as cofactor.

It localises to the cell inner membrane. The catalysed reaction is a quinone + NADH + 5 H(+)(in) = a quinol + NAD(+) + 4 H(+)(out). In terms of biological role, NDH-1 shuttles electrons from NADH, via FMN and iron-sulfur (Fe-S) centers, to quinones in the respiratory chain. The immediate electron acceptor for the enzyme in this species is believed to be ubiquinone. Couples the redox reaction to proton translocation (for every two electrons transferred, four hydrogen ions are translocated across the cytoplasmic membrane), and thus conserves the redox energy in a proton gradient. The chain is NADH-quinone oxidoreductase subunit I from Chromobacterium violaceum (strain ATCC 12472 / DSM 30191 / JCM 1249 / CCUG 213 / NBRC 12614 / NCIMB 9131 / NCTC 9757 / MK).